The primary structure comprises 248 residues: Probable transcriptional regulatory protein Fphi_1565 (248 aa).

This sequence belongs to the TACO1 family.

The protein resides in the cytoplasm. This Francisella philomiragia subsp. philomiragia (strain ATCC 25017 / CCUG 19701 / FSC 153 / O#319-036) protein is Probable transcriptional regulatory protein Fphi_1565.